The following is a 151-amino-acid chain: Small ribosomal subunit protein bS6 (151 aa).

The disordered stretch occupies residues 97-151 (EAEPSAMMQKRDRDDRKDRDRGDRPRRRDDDFGGGDRGDRGDRGDRPERNFGGEN). The segment covering 105–151 (QKRDRDDRKDRDRGDRPRRRDDDFGGGDRGDRGDRGDRPERNFGGEN) has biased composition (basic and acidic residues).

Belongs to the bacterial ribosomal protein bS6 family.

Functionally, binds together with bS18 to 16S ribosomal RNA. This Methylorubrum populi (strain ATCC BAA-705 / NCIMB 13946 / BJ001) (Methylobacterium populi) protein is Small ribosomal subunit protein bS6.